A 149-amino-acid polypeptide reads, in one-letter code: Down syndrome critical region protein 9 (149 aa).

The interval 1 to 41 (MGRICPVNSRARRLRARPGRPSGDSLPYHQLQGGAPRLWSP) is disordered.

As to expression, testis specific.

This is Down syndrome critical region protein 9 (DSCR9) from Homo sapiens (Human).